The sequence spans 344 residues: 4-hydroxy-3-methylbut-2-en-1-yl diphosphate synthase (flavodoxin) (344 aa).

[4Fe-4S] cluster contacts are provided by Cys-253, Cys-256, Cys-288, and Glu-295.

The protein belongs to the IspG family. Requires [4Fe-4S] cluster as cofactor.

It carries out the reaction (2E)-4-hydroxy-3-methylbut-2-enyl diphosphate + oxidized [flavodoxin] + H2O + 2 H(+) = 2-C-methyl-D-erythritol 2,4-cyclic diphosphate + reduced [flavodoxin]. It participates in isoprenoid biosynthesis; isopentenyl diphosphate biosynthesis via DXP pathway; isopentenyl diphosphate from 1-deoxy-D-xylulose 5-phosphate: step 5/6. Converts 2C-methyl-D-erythritol 2,4-cyclodiphosphate (ME-2,4cPP) into 1-hydroxy-2-methyl-2-(E)-butenyl 4-diphosphate. In Thermotoga petrophila (strain ATCC BAA-488 / DSM 13995 / JCM 10881 / RKU-1), this protein is 4-hydroxy-3-methylbut-2-en-1-yl diphosphate synthase (flavodoxin).